The primary structure comprises 230 residues: Sugar fermentation stimulation protein homolog (230 aa).

This sequence belongs to the SfsA family.

The sequence is that of Sugar fermentation stimulation protein homolog from Pyrococcus furiosus (strain ATCC 43587 / DSM 3638 / JCM 8422 / Vc1).